A 103-amino-acid polypeptide reads, in one-letter code: Large ribosomal subunit protein bL21 (103 aa).

This sequence belongs to the bacterial ribosomal protein bL21 family. Part of the 50S ribosomal subunit. Contacts protein L20.

In terms of biological role, this protein binds to 23S rRNA in the presence of protein L20. This Pseudoalteromonas atlantica (strain T6c / ATCC BAA-1087) protein is Large ribosomal subunit protein bL21.